The sequence spans 90 residues: Putative septation protein SpoVG (90 aa).

The protein belongs to the SpoVG family.

Could be involved in septation. The polypeptide is Putative septation protein SpoVG (Clostridium perfringens (strain SM101 / Type A)).